The primary structure comprises 679 residues: Protein hook (679 aa).

The Calponin-homology (CH) domain maps to Asn6 to Ala123. Coiled coils occupy residues Glu135–Gly437 and Gln480–Leu574.

It belongs to the hook family. Homodimer. Interacts with microtubules via its N-terminus.

The protein localises to the cytoplasm. It is found in the cytoskeleton. The protein resides in the endosome. Its subcellular location is the synapse. Its function is as follows. Involved in endocytic trafficking by stabilizing organelles of the endocytic pathway. Probably acts as a cytoskeletal linker protein required to tether endosome vesicles to the cytoskeleton. Involved in modulation of endocytosis at stages required for down-regulation of membrane proteins that control synapse size. Not involved in synaptic vesicle recycling. Required in R7 cells for boss endocytosis into multivesicular bodies (MVBs). Has a role in regulating adult longevity. This Drosophila sechellia (Fruit fly) protein is Protein hook.